The following is a 285-amino-acid chain: 2,3,4,5-tetrahydropyridine-2,6-dicarboxylate N-succinyltransferase (285 aa).

Arg-111 and Asp-148 together coordinate substrate.

This sequence belongs to the transferase hexapeptide repeat family. As to quaternary structure, homotrimer.

The protein localises to the cytoplasm. The catalysed reaction is (S)-2,3,4,5-tetrahydrodipicolinate + succinyl-CoA + H2O = (S)-2-succinylamino-6-oxoheptanedioate + CoA. It functions in the pathway amino-acid biosynthesis; L-lysine biosynthesis via DAP pathway; LL-2,6-diaminopimelate from (S)-tetrahydrodipicolinate (succinylase route): step 1/3. The sequence is that of 2,3,4,5-tetrahydropyridine-2,6-dicarboxylate N-succinyltransferase from Rhizobium rhizogenes (strain K84 / ATCC BAA-868) (Agrobacterium radiobacter).